A 562-amino-acid chain; its full sequence is Phosphopantothenoylcysteine decarboxylase subunit SIS2 (562 aa).

Positions 1 to 10 (MTAVASTSGK) are enriched in polar residues. 3 disordered regions span residues 1 to 63 (MTAV…SNAT), 97 to 165 (FSDL…KDYD), and 490 to 562 (GYPK…DKHQ). Over residues 27 to 42 (GQKEILLDHEDAKGKD) the composition is skewed to basic and acidic residues. 2 stretches are compositionally biased toward polar residues: residues 44 to 63 (IINS…SNAT) and 99 to 113 (DLKQ…TQLK). Residues Ser47, Ser50, Ser54, and Ser56 each carry the phosphoserine modification. The segment covering 121–134 (SPNSNPAPVSNSIP) has biased composition (low complexity). Polar residues predominate over residues 142-156 (NHTNTSRTTQLSGSP). Ser155 carries the phosphoserine modification. Residues 496–553 (EEEDDDEDEEEDDDEEEDTEDKNENNNDDDDDDDDDDDDDDDDDDDDDDDDEDEDEAE) show a composition bias toward acidic residues.

The protein belongs to the HFCD (homooligomeric flavin containing Cys decarboxylase) superfamily. Interacts with the C-terminal domain of PPZ1. Component of the phosphopantothenoylcysteine decarboxylase (PPCDC) complex, a heterotrimer composed of CAB3, SIS2 and VHS3.

It localises to the nucleus. The protein resides in the cytoplasm. Component of the phosphopantothenoylcysteine decarboxylase (PPCDC) involved in the coenzyme A synthesis. Acts as an inhibitory subunit of protein phosphatase PPZ1, which is involved in many cellular processes such as G1-S transition or salt tolerance. Also modulates the expression of the ENA1 ATPase. The protein is Phosphopantothenoylcysteine decarboxylase subunit SIS2 (SIS2) of Saccharomyces cerevisiae (strain ATCC 204508 / S288c) (Baker's yeast).